The primary structure comprises 490 residues: MRINPTTSDPGVSILENKNLGRIAQIIGPVLDVAFPPGKMPNIYNALVVKGRDTLGQEINVTCEVQQLLGNNRVRAVAMSATEGLKRGMDVVDMGTPLSVPVGGATLGRIFNVLGEPVDNLGPVDTRTTSPIHKSAPAFIQLDTKLSIFETGIKVVDLLAPYRRGGKIGLFGGAGVGKTVLIMELINNIAKAHGGVSVFGGVGERTREGNDLYMEMKESGVINEQNLAESKVALVYGQMNEPPGARMRVGLTALTMAEYFRDVNEQDVLLFIDNIFRFVQAGSEVSALLGRMPSAVGYQPTLSTEMGSLQERITSTKKGSITSIQAVYVPADDLTDPAPATTFAHLDATTVLSRGLAAKGIYPAVDPLDSTSTMLQPRIVGEEHYETAQQVKQTLQRYKELQDIIAILGLDELSEEDRLTVARARKIERFLSQPFFVAEVFTGSPGKYVGLAETIRGFKLILSGELDSLPEQAFYLVGNIDEATAKATNL.

Phosphothreonine is present on Thr-6. Ser-13 is subject to Phosphoserine. Gly-172–Thr-179 is an ATP binding site.

The protein belongs to the ATPase alpha/beta chains family. In terms of assembly, F-type ATPases have 2 components, CF(1) - the catalytic core - and CF(0) - the membrane proton channel. CF(1) has five subunits: alpha(3), beta(3), gamma(1), delta(1), epsilon(1). CF(0) has four main subunits: a(1), b(1), b'(1) and c(9-12).

It is found in the plastid. Its subcellular location is the chloroplast thylakoid membrane. The enzyme catalyses ATP + H2O + 4 H(+)(in) = ADP + phosphate + 5 H(+)(out). Functionally, produces ATP from ADP in the presence of a proton gradient across the membrane. The catalytic sites are hosted primarily by the beta subunits. The polypeptide is ATP synthase subunit beta, chloroplastic (Aethionema cordifolium (Lebanon stonecress)).